Here is a 481-residue protein sequence, read N- to C-terminus: Delta 4,5-hexuronate-2-O-sulfatase (481 aa).

Serine 64 bears the 3-oxoalanine (Ser) mark. 4 residues coordinate Zn(2+): cysteine 225, cysteine 226, histidine 462, and histidine 469. The tract at residues 453–481 (VDADPRCRNHTPGYPSHEGPGAREILKRK) is disordered. Residues 472-481 (PGAREILKRK) show a composition bias toward basic and acidic residues.

Belongs to the sulfatase family. Zn(2+) serves as cofactor. In terms of processing, the conversion to 3-oxoalanine (also known as C-formylglycine, FGly), of a serine or cysteine residue in prokaryotes and of a cysteine residue in eukaryotes, is critical for catalytic activity.

Exosulfatase involved in the degradation of the glycosaminoglycans (GAGs) chondroitin sulfate (CS), dermatan sulfate (DS) and heparan sulfate (HS). 2-O-sulfatase active on unsaturated non-reducing end hexuronate units. Has a slight preference for HS-derived structures. GAG-specific sulfatases play a key role in the persistence of the major human gut symbiont B.thetaiotaomicron in the host gastrointestinal tract. The protein is Delta 4,5-hexuronate-2-O-sulfatase of Bacteroides thetaiotaomicron (strain ATCC 29148 / DSM 2079 / JCM 5827 / CCUG 10774 / NCTC 10582 / VPI-5482 / E50).